Reading from the N-terminus, the 571-residue chain is Proline--tRNA ligase (571 aa).

This sequence belongs to the class-II aminoacyl-tRNA synthetase family. ProS type 1 subfamily. In terms of assembly, homodimer.

Its subcellular location is the cytoplasm. The enzyme catalyses tRNA(Pro) + L-proline + ATP = L-prolyl-tRNA(Pro) + AMP + diphosphate. Functionally, catalyzes the attachment of proline to tRNA(Pro) in a two-step reaction: proline is first activated by ATP to form Pro-AMP and then transferred to the acceptor end of tRNA(Pro). As ProRS can inadvertently accommodate and process non-cognate amino acids such as alanine and cysteine, to avoid such errors it has two additional distinct editing activities against alanine. One activity is designated as 'pretransfer' editing and involves the tRNA(Pro)-independent hydrolysis of activated Ala-AMP. The other activity is designated 'posttransfer' editing and involves deacylation of mischarged Ala-tRNA(Pro). The misacylated Cys-tRNA(Pro) is not edited by ProRS. In Pseudomonas fluorescens (strain Pf0-1), this protein is Proline--tRNA ligase.